The chain runs to 159 residues: Protransforming growth factor alpha (159 aa).

Positions 1–23 (MVPATGQLALLALGILLAVCQAL) are cleaved as a signal peptide. A propeptide spans 24–38 (ENSTSPLSDSPVAAA) (removed in mature form). The Extracellular segment spans residues 24-97 (ENSTSPLSDS…AVVAASQKKQ (74 aa)). An N-linked (GlcNAc...) asparagine glycan is attached at N25. The EGF-like domain maps to 44 to 83 (NKCPDSHTQYCFHGTCRFLVQEEKPACVCHSGYVGVRCEH). Disulfide bonds link C46–C59, C54–C70, and C72–C81. Positions 89-159 (VVAASQKKQA…TACCHSETVV (71 aa)) are cleaved as a propeptide — removed in mature form. Residues 98-123 (AITALVVVSIVALAVLIITCVLIHCC) traverse the membrane as a helical segment. The Cytoplasmic segment spans residues 124–159 (QLRKHCEWCRALVCRHEKPSALLKGRTACCHSETVV). 2 S-palmitoyl cysteine lipidation sites follow: C152 and C153.

In terms of assembly, interacts with the PDZ domains of SDCBP and SNTA1. The interaction with SDCBP, is required for the targeting to the cell surface. In the endoplasmic reticulum, in its immature form (i.e. with a prosegment and lacking full N-glycosylation), interacts with CNIH. In the Golgi apparatus, may form a complex with CNIH and GORASP2. Interacts (via cytoplasmic C-terminal domain) with NKD2. Interacts with MAGI3.

It localises to the secreted. It is found in the extracellular space. Its subcellular location is the cell membrane. Functionally, TGF alpha is a mitogenic polypeptide that is able to bind to the EGF receptor/EGFR and to act synergistically with TGF beta to promote anchorage-independent cell proliferation in soft agar. This Mus musculus (Mouse) protein is Protransforming growth factor alpha (Tgfa).